The following is a 160-amino-acid chain: ATP synthase subunit b (160 aa).

The helical transmembrane segment at 12-32 (ISFVLFVWFCMKYVWYPFISI) threads the bilayer.

The protein belongs to the ATPase B chain family. In terms of assembly, F-type ATPases have 2 components, F(1) - the catalytic core - and F(0) - the membrane proton channel. F(1) has five subunits: alpha(3), beta(3), gamma(1), delta(1), epsilon(1). F(0) has three main subunits: a(1), b(2) and c(10-14). The alpha and beta chains form an alternating ring which encloses part of the gamma chain. F(1) is attached to F(0) by a central stalk formed by the gamma and epsilon chains, while a peripheral stalk is formed by the delta and b chains.

It is found in the cell inner membrane. F(1)F(0) ATP synthase produces ATP from ADP in the presence of a proton or sodium gradient. F-type ATPases consist of two structural domains, F(1) containing the extramembraneous catalytic core and F(0) containing the membrane proton channel, linked together by a central stalk and a peripheral stalk. During catalysis, ATP synthesis in the catalytic domain of F(1) is coupled via a rotary mechanism of the central stalk subunits to proton translocation. Functionally, component of the F(0) channel, it forms part of the peripheral stalk, linking F(1) to F(0). In Blochmanniella pennsylvanica (strain BPEN), this protein is ATP synthase subunit b.